The following is a 96-amino-acid chain: Integration host factor subunit beta (96 aa).

Belongs to the bacterial histone-like protein family. In terms of assembly, heterodimer of an alpha and a beta chain.

This protein is one of the two subunits of integration host factor, a specific DNA-binding protein that functions in genetic recombination as well as in transcriptional and translational control. This chain is Integration host factor subunit beta, found in Caulobacter vibrioides (strain ATCC 19089 / CIP 103742 / CB 15) (Caulobacter crescentus).